The chain runs to 535 residues: Cytochrome c oxidase subunit 1 (535 aa).

Residues 15 to 37 (IAILYFIFSTFCGLAGTAMSFII) traverse the membrane as a helical segment. Ca(2+)-binding residues include E40, A43, and G45. Helical transmembrane passes span 58-80 (VLVTGHTILMVFFLVMPMLIGGF), 147-169 (LAIFSLHLTTISSLLGTINFIVT), 190-212 (ILITAVMLLMSLPVLSAGVTMLL), 238-260 (WFFGHPEVYIMIVPTFGMMSHIV), and 267-289 (PVFGEISMIYTMGSISLLGFLVW). Fe(II)-heme a is bound at residue H63. H242 serves as a coordination point for Cu cation. Residues 242-246 (HPEVY) constitute a cross-link (1'-histidyl-3'-tyrosine (His-Tyr)). An O2-binding site is contributed by Y246. Positions 291 and 292 each coordinate Cu cation. 2 consecutive transmembrane segments (helical) span residues 304–326 (AYFTSATMIITIPTSIKVFSWLT) and 339–361 (MLYTLSFLFLFTVGGLTGVVLAN). Residues H369 and D370 each coordinate Mg(2+). 2 helical membrane passes run 376 to 398 (THFHYVLSLGAVFSMFAGYYYWS) and 415 to 437 (FWLIFLGTNIIFFPMHFLGINGM). Residue H377 coordinates heme a3. Residue H379 coordinates Fe(II)-heme a. P442 is a binding site for Ca(2+). The helical transmembrane segment at 452–474 (NLVSSFGSMMTIMSLMLFTYIIY) threads the bilayer.

Belongs to the heme-copper respiratory oxidase family. Component of the cytochrome c oxidase (complex IV, CIV), a multisubunit enzyme composed of a catalytic core of 3 subunits and several supernumerary subunits. The complex exists as a monomer or a dimer and forms supercomplexes (SCs) in the inner mitochondrial membrane with ubiquinol-cytochrome c oxidoreductase (cytochrome b-c1 complex, complex III, CIII). The cofactor is heme. It depends on Cu cation as a cofactor.

It localises to the mitochondrion inner membrane. The catalysed reaction is 4 Fe(II)-[cytochrome c] + O2 + 8 H(+)(in) = 4 Fe(III)-[cytochrome c] + 2 H2O + 4 H(+)(out). It functions in the pathway energy metabolism; oxidative phosphorylation. Its function is as follows. Component of the cytochrome c oxidase, the last enzyme in the mitochondrial electron transport chain which drives oxidative phosphorylation. The respiratory chain contains 3 multisubunit complexes succinate dehydrogenase (complex II, CII), ubiquinol-cytochrome c oxidoreductase (cytochrome b-c1 complex, complex III, CIII) and cytochrome c oxidase (complex IV, CIV), that cooperate to transfer electrons derived from NADH and succinate to molecular oxygen, creating an electrochemical gradient over the inner membrane that drives transmembrane transport and the ATP synthase. Cytochrome c oxidase is the component of the respiratory chain that catalyzes the reduction of oxygen to water. Electrons originating from reduced cytochrome c in the intermembrane space (IMS) are transferred via the dinuclear copper A center (CU(A)) of subunit 2 and heme A of subunit 1 to the active site in subunit 1, a binuclear center (BNC) formed by heme A3 and copper B (CU(B)). The BNC reduces molecular oxygen to 2 water molecules using 4 electrons from cytochrome c in the IMS and 4 protons from the mitochondrial matrix. The protein is Cytochrome c oxidase subunit 1 (COX1) of Eremothecium gossypii (strain ATCC 10895 / CBS 109.51 / FGSC 9923 / NRRL Y-1056) (Yeast).